Reading from the N-terminus, the 314-residue chain is tRNA dimethylallyltransferase (314 aa).

9-16 (GPTAVGKT) is an ATP binding site. 11–16 (TAVGKT) serves as a coordination point for substrate. The segment at 34–37 (DSVQ) is interaction with substrate tRNA.

This sequence belongs to the IPP transferase family. Monomer. The cofactor is Mg(2+).

It catalyses the reaction adenosine(37) in tRNA + dimethylallyl diphosphate = N(6)-dimethylallyladenosine(37) in tRNA + diphosphate. Catalyzes the transfer of a dimethylallyl group onto the adenine at position 37 in tRNAs that read codons beginning with uridine, leading to the formation of N6-(dimethylallyl)adenosine (i(6)A). The chain is tRNA dimethylallyltransferase from Desulfitobacterium hafniense (strain DSM 10664 / DCB-2).